Reading from the N-terminus, the 429-residue chain is Histidine--tRNA ligase (429 aa).

It belongs to the class-II aminoacyl-tRNA synthetase family. Homodimer.

It is found in the cytoplasm. It carries out the reaction tRNA(His) + L-histidine + ATP = L-histidyl-tRNA(His) + AMP + diphosphate + H(+). The sequence is that of Histidine--tRNA ligase from Streptococcus pneumoniae (strain 70585).